Reading from the N-terminus, the 230-residue chain is Large ribosomal subunit protein uL1 (230 aa).

This sequence belongs to the universal ribosomal protein uL1 family. As to quaternary structure, part of the 50S ribosomal subunit.

Functionally, binds directly to 23S rRNA. The L1 stalk is quite mobile in the ribosome, and is involved in E site tRNA release. Protein L1 is also a translational repressor protein, it controls the translation of the L11 operon by binding to its mRNA. The chain is Large ribosomal subunit protein uL1 from Staphylococcus aureus (strain N315).